Here is an 840-residue protein sequence, read N- to C-terminus: MSAFRLWPGLLIMLGSLCHRGSPCGLSTHVEIGHRALEFLQLHNGRVNYRELLLEHQDAYQAGIVFPDCFYPSICKGGKFHDVSESTHWTPFLNASVHYIRENYPLPWEKDTEKLVAFLFGITSHMAADVSWHSLGLEQGFLRTMGAIDFHGSYSEAHSAGDFGGDVLSQFEFNFNYLARRWYVPVKDLLGIYEKLYGRKVITENVIVDCSHIQFLEMYGEMLAVSKLYPTYSTKSPFLVEQFQEYFLGGLDDMAFWSTNIYHLTSFMLENGTSDCNLPENPLFIACGGQQNHTQGSKMQKNDFHRNLTTSLTESVDRNINYTERGVFFSVNSWTPDSMSFIYKALERNIRTMFIGGSQLSQKHVSSPLASYFLSFPYARLGWAMTSADLNQDGHGDLVVGAPGYSRPGHIHIGRVYLIYGNDLGLPPVDLDLDKEAHRILEGFQPSGRFGSALAVLDFNVDGVPDLAVGAPSVGSEQLTYKGAVYVYFGSKQGGMSSSPNITISCQDIYCNLGWTLLAADVNGDSEPDLVIGSPFAPGGGKQKGIVAAFYSGPSLSDKEKLNVEAANWTVRGEEDFSWFGYSLHGVTVDNRTLLLVGSPTWKNASRLGHLLHIRDEKKSLGRVYGYFPPNGQSWFTISGDKAMGKLGTSLSSGHVLMNGTLKQVLLVGAPTYDDVSKVAFLTVTLHQGGATRMYALTSDAQPLLLSTFSGDRRFSRFGGVLHLSDLDDDGLDEIIMAAPLRIADVTSGLIGGEDGRVYVYNGKETTLGDMTGKCKSWITPCPEEKAQYVLISPEASSRFGSSLITVRSKAKNQVVIAAGRSSLGARLSGALHVYSLGSD.

An N-terminal signal peptide occupies residues 1 to 23 (MSAFRLWPGLLIMLGSLCHRGSP). N-linked (GlcNAc...) asparagine glycans are attached at residues asparagine 94, asparagine 271, asparagine 292, asparagine 307, and asparagine 321. FG-GAP repeat units lie at residues 367–428 (SPLA…GLPP), 436–497 (EAHR…GGMS), 499–559 (SPNI…LSDK), 563–623 (NVEA…SLGR), 633–693 (QSWF…GATR), 704–770 (LLLS…TLGD), and 788–840 (QYVL…LGSD). Residues asparagine 501, asparagine 568, asparagine 591, asparagine 604, and asparagine 659 are each glycosylated (N-linked (GlcNAc...) asparagine).

The protein belongs to the GPLD1 family. Monomer.

It localises to the secreted. The catalysed reaction is a 6-(alpha-D-glucosaminyl)-1-(1,2-diacyl-sn-glycero-3-phospho)-1D-myo-inositol + H2O = 6-(alpha-D-glucosaminyl)-1D-myo-inositol + a 1,2-diacyl-sn-glycero-3-phosphate + H(+). Functionally, this protein hydrolyzes the inositol phosphate linkage in proteins anchored by phosphatidylinositol glycans (GPI-anchor) thus releasing these proteins from the membrane. The sequence is that of Phosphatidylinositol-glycan-specific phospholipase D (GPLD1) from Homo sapiens (Human).